The chain runs to 761 residues: Zinc finger protein 287 (761 aa).

Positions Arg49 to Leu131 constitute an SCAN box domain. The segment at Glu134–His154 is disordered. Residues Met170–Pro238 form the KRAB domain. 14 C2H2-type zinc fingers span residues Tyr368–His390, Tyr396–His418, Tyr424–His446, Tyr452–His474, Tyr480–His502, Tyr508–His530, Tyr536–His558, Tyr564–His586, Tyr592–His614, Tyr620–His642, Phe648–His670, Tyr676–His698, Tyr704–His726, and Tyr732–His754.

Belongs to the krueppel C2H2-type zinc-finger protein family.

It localises to the nucleus. May be involved in transcriptional regulation. The polypeptide is Zinc finger protein 287 (Pongo pygmaeus (Bornean orangutan)).